The sequence spans 92 residues: Cytochrome c2 (92 aa).

Cys12, Cys15, His16, and Met66 together coordinate heme c.

The protein belongs to the cytochrome c family. In terms of processing, binds 1 heme c group covalently per subunit.

Functionally, cytochrome c2 is found mainly in purple, non-sulfur, photosynthetic bacteria where it functions as the electron donor to the oxidized bacteriochlorophyll in the photophosphorylation pathway. However, it may also have a role in the respiratory chain and is found in some non-photosynthetic bacteria. The protein is Cytochrome c2 of Rhodocyclus tenuis (Rhodospirillum tenue).